Here is a 344-residue protein sequence, read N- to C-terminus: Unsaturated rhamnogalacturonyl hydrolase YesR (344 aa).

Residues 30 to 31 (DW), N74, and 118 to 128 (QHTVNAAEYVF) contribute to the substrate site. D135 functions as the Proton donor in the catalytic mechanism. Residues 198–202 (RANGW) and 308–309 (NA) each bind substrate.

The protein belongs to the glycosyl hydrolase 105 family. As to quaternary structure, monomer.

The protein resides in the cytoplasm. The catalysed reaction is 2-O-(4-deoxy-beta-L-threo-hex-4-enopyranuronosyl)-alpha-L-rhamnose + H2O = 5-dehydro-4-deoxy-D-glucuronate + L-rhamnopyranose. Functionally, catalyzes the hydrolysis of unsaturated rhamnogalacturonan disaccharide to yield unsaturated D-galacturonic acid and L-rhamnose. It cannot act on unsaturated glucuronyl hydrolase (UGL) substrates containing unsaturated D-glucuronic acid at the non-reducing terminus, although the active pockets of YesR and UGL are very similar. The chain is Unsaturated rhamnogalacturonyl hydrolase YesR (yesR) from Bacillus subtilis (strain 168).